A 297-amino-acid polypeptide reads, in one-letter code: Nucleotide-binding protein BTH_I0482 (297 aa).

8–15 is an ATP binding site; that stretch reads GISGSGKS. Residue 57-60 participates in GTP binding; sequence DARS.

This sequence belongs to the RapZ-like family.

Displays ATPase and GTPase activities. This chain is Nucleotide-binding protein BTH_I0482, found in Burkholderia thailandensis (strain ATCC 700388 / DSM 13276 / CCUG 48851 / CIP 106301 / E264).